The following is a 436-amino-acid chain: Histidine--tRNA ligase (436 aa).

The protein belongs to the class-II aminoacyl-tRNA synthetase family.

The protein localises to the cytoplasm. The enzyme catalyses tRNA(His) + L-histidine + ATP = L-histidyl-tRNA(His) + AMP + diphosphate + H(+). This is Histidine--tRNA ligase from Thermococcus kodakarensis (strain ATCC BAA-918 / JCM 12380 / KOD1) (Pyrococcus kodakaraensis (strain KOD1)).